Consider the following 176-residue polypeptide: Ribosome maturation factor RimM (176 aa).

The region spanning 101 to 174 (EGHYYIYQLL…EIRVELPPGL (74 aa)) is the PRC barrel domain.

The protein belongs to the RimM family. As to quaternary structure, binds ribosomal protein uS19.

Its subcellular location is the cytoplasm. Its function is as follows. An accessory protein needed during the final step in the assembly of 30S ribosomal subunit, possibly for assembly of the head region. Essential for efficient processing of 16S rRNA. May be needed both before and after RbfA during the maturation of 16S rRNA. It has affinity for free ribosomal 30S subunits but not for 70S ribosomes. This is Ribosome maturation factor RimM from Moorella thermoacetica (strain ATCC 39073 / JCM 9320).